Here is a 703-residue protein sequence, read N- to C-terminus: MEALLEGIQNRGHGGGFLTSCEAELQELMKQIDIMVAHKKSEWEGRTHALETCLKIREQELKSLRSQLDVTHKEVGMLHQQVEEHEKIKQEMTMEYKQELKKLHEELCILKRSYEKLQKKQMREFRGNTKNHREDRSEIERLTAKIEEFRQKSLDWEKQRLIYQQQVSSLEAQRKALAEQSEIIQAQLVNRKQKLESVELSSQSEIQHLSSKLERANDTICANELEIERLTMRVNDLVGTSMTVLQEQQQKEEKLRESEKLLEALQEEKRELKAALQSQENLIHEARIQKEKLQEKVKATNTQHAVEAIRPREESLAEKKYTSQGQGDLDSVLSQLNFTHTSEDLLQAEVTCLEGSLESVSATCKQLSQELMEKYEELKRMEAHNNEYKAEIKKLKEQILQGEQSYSSALEGMKMEISHLTQELHQRDITIASTKGSSSDMEKRLRAEMQKAEDKAVEHKEILDQLESLKLENRHLSEMVMKLELGLHEAKEISLADLQENYIEALNKLVSENQQLQKDLMNTKSQLEISTQMCKKQNDRIFKPTHSRTTEFKNTEFKPTHGQHRHDGIKTEHYKTDLHSPRGQASDSINPMSRVLSPLSPQISPCSSTRSLTSYSLCKTHSLPSALDTNEANFSDTMSESMNDQEEFISSCSLPVSPLGSIATRFLEEEELRSHHILERLDAHIEELKRESEKTVRQFTALK.

M1 carries the post-translational modification N-acetylmethionine. Coiled-coil stretches lie at residues 22–199 (EAEL…ESVE), 242–306 (MTVL…QHAV), 353–533 (LEGS…STQM), and 676–703 (HILE…TALK). Residue S278 is modified to Phosphoserine.

This sequence belongs to the CEP63 family. Interacts with CEP152 and CDK1; these interactions recruit both ligands to centrosomes. Interacts with CDK2, CDK5RAP2, WDR62, CEP90, KIAA0753/moonraker and CCDC14. CEP63, CDK5RAP2, CEP152, WDR62 are proposed to form a stepwise assembled complex at the centrosome forming a ring near parental centrioles. Interacts with CCDC57; the interaction is required for their location to proximal end of centrioles. Interacts with FXR1; promoting its stabilization. As to quaternary structure, (Microbial infection) Interacts with zika virus serine protease NS3; this interaction disorganizes the centrosome. Post-translationally, polyubiquitinated via 'Lys-48'-linked ubiquitin, leading to its degradation. Deubiquitinated by USP36, promoting its stabilization.

It is found in the cytoplasm. The protein localises to the cytoskeleton. Its subcellular location is the microtubule organizing center. The protein resides in the centrosome. It localises to the centriole. It is found in the centriolar satellite. Required for normal spindle assembly. Plays a key role in mother-centriole-dependent centriole duplication; the function seems also to involve CEP152, CDK5RAP2 and WDR62 through a stepwise assembled complex at the centrosome that recruits CDK2 required for centriole duplication. Reported to be required for centrosomal recruitment of CEP152; however, this function has been questioned. Also recruits CDK1 to centrosomes. Plays a role in DNA damage response. Following DNA damage, such as double-strand breaks (DSBs), is removed from centrosomes; this leads to the inactivation of spindle assembly and delay in mitotic progression. Promotes stabilization of FXR1 protein by inhibiting FXR1 ubiquitination. In Homo sapiens (Human), this protein is Centrosomal protein of 63 kDa.